A 224-amino-acid polypeptide reads, in one-letter code: Cytidylate kinase (224 aa).

Residue 11–19 coordinates ATP; sequence GPAAAGKST.

It belongs to the cytidylate kinase family. Type 1 subfamily.

It is found in the cytoplasm. It catalyses the reaction CMP + ATP = CDP + ADP. It carries out the reaction dCMP + ATP = dCDP + ADP. The sequence is that of Cytidylate kinase from Listeria monocytogenes serotype 4a (strain HCC23).